The primary structure comprises 450 residues: WD repeat-containing protein ATCSA-1 (450 aa).

4 WD repeats span residues 41–81, 101–141, 148–185, and 188–228; these read PHRG…DYEA, GHKY…AVVD, VYRTAMSSMAMSHTLIAAGTEDVQVRLCDIASGAFSHT, and GHRD…CFRV. The disordered stretch occupies residues 269–298; the sequence is LQSKQTGSQSVKGSSSAKASVEKSRQKRIH. Residues 271-287 show a composition bias toward low complexity; the sequence is SKQTGSQSVKGSSSAKA. WD repeat units lie at residues 310–349 and 397–436; these read AHYGAVTGLKATNDGMYLLSAGSDSRIRLWDIESGRNTLV and GHYESVNTCCFNSNDQELYTSGSDRQILVWSPGGTVEDEM.

As to quaternary structure, interacts with DDB1A. In terms of tissue distribution, expressed in roots, leaves, stems, flowers and siliques.

It localises to the nucleus. In terms of biological role, involved in UV-B tolerance and genome integrity. In association with DDB2, is necessary for repair of UV-B-induced DNA lesions. This is WD repeat-containing protein ATCSA-1 from Arabidopsis thaliana (Mouse-ear cress).